The primary structure comprises 405 residues: Nicotinate phosphoribosyltransferase (405 aa).

His230 carries the phosphohistidine; by autocatalysis modification.

Belongs to the NAPRTase family. In terms of processing, transiently phosphorylated on a His residue during the reaction cycle. Phosphorylation strongly increases the affinity for substrates and increases the rate of nicotinate D-ribonucleotide production. Dephosphorylation regenerates the low-affinity form of the enzyme, leading to product release.

It carries out the reaction nicotinate + 5-phospho-alpha-D-ribose 1-diphosphate + ATP + H2O = nicotinate beta-D-ribonucleotide + ADP + phosphate + diphosphate. It functions in the pathway cofactor biosynthesis; NAD(+) biosynthesis; nicotinate D-ribonucleotide from nicotinate: step 1/1. In terms of biological role, catalyzes the synthesis of beta-nicotinate D-ribonucleotide from nicotinate and 5-phospho-D-ribose 1-phosphate at the expense of ATP. This chain is Nicotinate phosphoribosyltransferase, found in Bordetella bronchiseptica (strain ATCC BAA-588 / NCTC 13252 / RB50) (Alcaligenes bronchisepticus).